The chain runs to 85 residues: Progonadoliberin-2 (85 aa).

Positions 1-23 are cleaved as a signal peptide; the sequence is MCVSRLVLLFGLLLCVGAQLSNA. Q24 bears the Pyrrolidone carboxylic acid mark. The residue at position 33 (G33) is a Glycine amide.

Belongs to the GnRH family.

Its subcellular location is the secreted. Stimulates the secretion of gonadotropins. This is Progonadoliberin-2 (gnrh2) from Dicentrarchus labrax (European seabass).